A 306-amino-acid polypeptide reads, in one-letter code: D-alanine--D-alanine ligase (306 aa).

Residues Lys-104–Glu-303 enclose the ATP-grasp domain. Val-134–Thr-189 provides a ligand contact to ATP. Mg(2+) contacts are provided by Asp-257, Glu-270, and Asn-272.

This sequence belongs to the D-alanine--D-alanine ligase family. Requires Mg(2+) as cofactor. The cofactor is Mn(2+).

It is found in the cytoplasm. It carries out the reaction 2 D-alanine + ATP = D-alanyl-D-alanine + ADP + phosphate + H(+). The protein operates within cell wall biogenesis; peptidoglycan biosynthesis. Functionally, cell wall formation. This chain is D-alanine--D-alanine ligase, found in Haemophilus influenzae (strain 86-028NP).